The chain runs to 84 residues: Alpha-like toxin BmK M1 (84 aa).

A signal peptide spans 1–19 (MNYLVMISFALLLMTGVES). An LCN-type CS-alpha/beta domain is found at 21 to 83 (RDAYIAKPHN…VPIRVPGKCH (63 aa)). Disulfide bonds link Cys-31-Cys-82, Cys-35-Cys-55, Cys-41-Cys-65, and Cys-45-Cys-67. A propeptide (removed by a carboxypeptidase) is located at residue Arg-84.

The protein belongs to the long (4 C-C) scorpion toxin superfamily. Sodium channel inhibitor family. Alpha subfamily. Expressed by the venom gland.

Its subcellular location is the secreted. In terms of biological role, alpha toxins bind voltage-independently at site-3 of sodium channels (Nav) and inhibit the inactivation of the activated channels thereby blocking neuronal transmission. This toxin is active against both mammals and insects, and is classified as an alpha-like toxin. It is active on Nav1.2/SCN2A (EC(50)=139-252 nM), Nav1.3/SCN3A (EC(50)=565 nM), Nav1.4/SCN4A and Nav1.5/SCN5A (EC(50)=195-500 nM), Nav1.6/SCN8A (EC(50)=214 nM), and drosophila DmNav1 (EC(50)=30 nM). In mNav1.6/SCN8A, the toxin induces a large increase in both transient and persistent currents, which correlates with a prominent reduction in the fast component of inactivating current. In rNav1.2/SCN2A and rNav1.3/SCN3A, toxin-increased currents is much smaller. Moreover, the toxin only accelerates the slow inactivation development and delay recovery of mNav1.6/SCN8A through binding to the channel in the open state. Is 6-fold more toxic than BmK-M2. In vivo, intrahippocampal injection into rat induces epileptiform responses. In addition, intraplantar injection into rat induces spontaneous nociception and hyperalgesia. The protein is Alpha-like toxin BmK M1 of Olivierus martensii (Manchurian scorpion).